A 1248-amino-acid polypeptide reads, in one-letter code: Reverse gyrase 1 (1248 aa).

The RG N-terminal-type zinc finger occupies 7–44 (IPPSIYLFSCPNCGRSISTYRLLLGSVCNICLEEDKEY). Zn(2+) contacts are provided by Cys16, Cys19, Cys34, and Cys37. ATP is bound by residues Gln92 and 109-116 (APPGLGKT). One can recognise a Helicase ATP-binding domain in the interval 96–262 (IYRLLSGESF…KKYRENTQKN (167 aa)). The DEAD box signature appears at 219–222 (DDVD). The topoisomerase I stretch occupies residues 621–1248 (QKVKTVLLVV…QVYEEINEIR (628 aa)). In terms of domain architecture, Toprim spans 625–789 (TVLLVVESPN…NIRRAEFHEV (165 aa)). Glu631 lines the Mg(2+) pocket. Residues 706–735 (IKKCENNHQFTDFFESNKCPRCMTTKVRYD) form an RG C-terminal-type; atypical zinc finger. Zn(2+)-binding residues include Cys709, His713, Cys724, and Cys727. A Mg(2+)-binding site is contributed by Asp758. Positions 805–1248 (NVNLVKSQLV…QVYEEINEIR (444 aa)) constitute a Topo IA-type catalytic domain. Catalysis depends on Tyr965, which acts as the O-(5'-phospho-DNA)-tyrosine intermediate.

This sequence in the N-terminal section; belongs to the DEAD box helicase family. DDVD subfamily. It in the C-terminal section; belongs to the type IA topoisomerase family. In terms of assembly, monomer. It depends on Zn(2+) as a cofactor. The cofactor is Mg(2+). The N-terminus is blocked.

It is found in the cytoplasm. The catalysed reaction is ATP + H2O = ADP + phosphate + H(+). In terms of biological role, modifies the topological state of DNA by introducing positive supercoils in an ATP-dependent process. Increases the linking number in steps of +1. Has a DNA-stimulated ATPase activity; closed circular ssDNA stimulates ATPase much better than dsDNA although negative supercoiled, positive supercoiled and relaxed dsDNA all stimulate ATPase activity. All NTPs permit topoisomerization (relaxation) of negatively supercoiled dsDNA without nucleotide hydrolysis. It transiently cleaves a single DNA strand and remains covalently bound to the 5' DNA end. Acts via a tyrosine residue. Reverse gyrase binds and unwinds DNA independently of ATP binding and DNA cleavage. May be involved in rewinding the DNA strands in the regions of the chromosome that have opened up to allow transcription or replication, probably acts via ssDNA regions of the chromosome. The polypeptide is Reverse gyrase 1 (Sulfolobus acidocaldarius (strain ATCC 33909 / DSM 639 / JCM 8929 / NBRC 15157 / NCIMB 11770)).